The following is a 122-amino-acid chain: Small ribosomal subunit protein uS12c (122 aa).

This sequence belongs to the universal ribosomal protein uS12 family. Part of the 30S ribosomal subunit.

The protein resides in the plastid. Its subcellular location is the chloroplast. In terms of biological role, with S4 and S5 plays an important role in translational accuracy. Located at the interface of the 30S and 50S subunits. This chain is Small ribosomal subunit protein uS12c (rps12), found in Illicium oligandrum (Star anise).